We begin with the raw amino-acid sequence, 720 residues long: TAL effector protein Rip19 (720 aa).

Disordered regions lie at residues S13–V85 and Q175–L205. Residues P67–V85 show a composition bias toward pro residues. The short motif at R185–R191 is the Nuclear localization signal 1 element. A Cryptic repeat -1 repeat occupies L286–R320. The stretch at L321–H354 is one Cryptic repeat 0 repeat. The stretch at L355–A389 is one Core repeat 1 repeat. The stretch at L390–S423 is one Cryptic repeat +1 repeat. The Cryptic repeat +2 repeat unit spans residues L424–R457. Short sequence motifs (nuclear localization signal) lie at residues R455–R458, H583–R586, and R620–R623. The disordered stretch occupies residues S571–W611.

Belongs to the transcription activator-like effector (TALE) family. RipTAL/RTL subfamily.

The protein localises to the secreted. It is found in the host nucleus. Functionally, does not activate plant gene transcription, because it has too few core repeats. The chain is TAL effector protein Rip19 from Ralstonia solanacearum (Pseudomonas solanacearum).